The chain runs to 217 residues: Ras-related protein Rab-39A (217 aa).

Serine 17, glycine 20, lysine 21, serine 22, cysteine 23, and threonine 44 together coordinate GTP. Serine 22 lines the Mg(2+) pocket. Positions 39 to 47 (PACDPTVGV) are switch-I. Mg(2+)-binding residues include threonine 44 and aspartate 68. Residues glycine 71, histidine 127, lysine 128, aspartate 130, alanine 158, and lysine 159 each coordinate GTP. Residues 71 to 87 (GQERFRSITRSYYRNSV) form a switch-II region. 2 S-geranylgeranyl cysteine lipidation sites follow: cysteine 215 and cysteine 217. Cysteine 217 carries the post-translational modification Cysteine methyl ester.

It belongs to the small GTPase superfamily. Rab family. Interacts (GDP-bound) with C9orf72; C9orf72 acts as a GEF for RAB39A. Interacts (GTP-bound) with HOPS complex components VPS39 and VPS41, and STX17; interaction between HOPS components and RAB39A contributes to obtaining a functional HOPS complex that promotes membrane fusion driven by STX17-SNAP29-VAMP8. Interacts with BECN1. Probably associates with the PI3K (PI3KC3/PI3K-III/class III phosphatidylinositol 3-kinase) complex. Interacts with UACA. Interacts with isoform a of RASSF1. Does not interact with isoform c of RASSF1. Mg(2+) serves as cofactor. Post-translationally, prenylated. Prenylation is required for association with cellular membranes.

It is found in the cell membrane. It localises to the cytoplasmic vesicle. The protein resides in the phagosome membrane. Its subcellular location is the late endosome membrane. The protein localises to the lysosome membrane. It is found in the autolysosome membrane. It catalyses the reaction GTP + H2O = GDP + phosphate + H(+). Regulated by guanine nucleotide exchange factors (GEFs) including c9Orf72, which promote the exchange of bound GDP for free GTP. Regulated by GTPase activating proteins (GAPs) which increase the GTP hydrolysis activity. Inhibited by GDP dissociation inhibitors (GDIs). The small GTPases Rab are key regulators of intracellular membrane trafficking, from the formation of transport vesicles to their fusion with membranes. Rabs cycle between an inactive GDP-bound form and an active GTP-bound form that is able to recruit to membranes different sets of downstream effectors directly responsible for vesicle formation, movement, tethering and fusion. RAB39A regulates autophagosome-lysosome fusion via recruitment of the HOPS endosomal tethering complex onto lysosomes; this process involves lysosomal RAB39A and autophagosomal RAB2A recruitment of HOPS subcomplexes VPS41-VPS16-VPS18-VPS33A and VPS39-VPS11, respectively, which assemble into a functional complex to mediate membrane tethering and SNAREs-driven membrane fusion. Also negatively regulates lipopolysaccharide (LPS)-induced autophagosome formation in macrophages, possibly by implicating PI3K. Promotes the delivery of MHC-I molecules from the ER to phagosomes and the generation of peptide-loaded MHC-I complexes in phagosomes, thus enhancing antigen cross-presentation by dendritic cells. Plays a role in the maturation and acidification of phagosomes that engulf pathogens, such as S.aureus and M.tuberculosis. Plays a role in the fusion of phagosomes with lysosomes. May be involved in multiple neurite formation. The protein is Ras-related protein Rab-39A of Mus musculus (Mouse).